The following is a 247-amino-acid chain: Mitochondrial intermembrane space import and assembly protein 40 (247 aa).

A mitochondrion-targeting transit peptide spans 1 to 28; that stretch reads MLSSKLVACSAGRSVQRISRTFLPAMRG. The Mitochondrial matrix portion of the chain corresponds to 29–45; the sequence is VATKAAAGPSRQSALSS. The helical; Signal-anchor for type II membrane protein transmembrane segment at 46–63 threads the bilayer; the sequence is YSIAAVTAIGVGASFYAL. Over 64-247 the chain is Mitochondrial intermembrane; it reads QSRSSAIQCE…SSGGKEGASA (184 aa). Residues 81 to 96 show a composition bias toward basic and acidic residues; that stretch reads RLKPKEAKGDATLHKD. The segment at 81–114 is disordered; the sequence is RLKPKEAKGDATLHKDAHTRHAPAEVQDERVEPV. Disulfide bonds link Cys149–Cys151, Cys160–Cys193, and Cys170–Cys183. Residues 157-201 form the CHCH domain; the sequence is HGPCGEQFKLAFSCFVYSEAEPKGIDCVDKFKAMQDCFREHPDVY. Short sequence motifs (cx9C motif) lie at residues 160-170 and 183-193; these read CGEQFKLAFSC and CVDKFKAMQDC. The segment at 217–247 is disordered; the sequence is KEEANAKSNGLNDAAQEAVEESSGGKEGASA.

In terms of assembly, monomer. Requires Cu(2+) as cofactor. Zn(2+) serves as cofactor.

Its subcellular location is the mitochondrion inner membrane. Its function is as follows. Required for the import and folding of small cysteine-containing proteins (small Tim) in the mitochondrial intermembrane space (IMS). Forms a redox cycle with ERV1 that involves a disulfide relay system. Precursor proteins to be imported into the IMS are translocated in their reduced form into the mitochondria. The oxidized form of MIA40 forms a transient intermolecular disulfide bridge with the reduced precursor protein, resulting in oxidation of the precursor protein that now contains an intramolecular disulfide bond and is able to undergo folding in the IMS. The polypeptide is Mitochondrial intermembrane space import and assembly protein 40 (MIA40) (Mycosarcoma maydis (Corn smut fungus)).